The primary structure comprises 145 residues: Hemoglobin fetal subunit beta (145 aa).

In terms of domain architecture, Globin spans 1-145 (MLSAEEKASV…VANALAHRYH (145 aa)). Residues His62 and His91 each coordinate heme b.

The protein belongs to the globin family. Heterotetramer of two alpha chains and two beta chains. As to expression, red blood cells.

Involved in oxygen transport from the lung to the various peripheral tissues. This is Hemoglobin fetal subunit beta from Capra hircus (Goat).